The chain runs to 491 residues: Adenylosuccinate synthetase, chloroplastic (491 aa).

Residues 78–84 (GDEGKGK) and 106–108 (GHT) each bind GTP. Catalysis depends on aspartate 79, which acts as the Proton acceptor. The Mg(2+) site is built by aspartate 79 and glycine 106. IMP-binding positions include 79–82 (DEGK), 104–107 (NAGH), threonine 196, arginine 210, glutamine 290, threonine 305, and arginine 369. Histidine 107 functions as the Proton donor in the catalytic mechanism. Residue 365–371 (TTTGRPR) participates in substrate binding. Residues arginine 371, 397-399 (KLD), and 480-482 (GIG) each bind GTP.

The protein belongs to the adenylosuccinate synthetase family. As to quaternary structure, homodimer. Requires Mg(2+) as cofactor.

Its subcellular location is the plastid. The protein resides in the chloroplast. It carries out the reaction IMP + L-aspartate + GTP = N(6)-(1,2-dicarboxyethyl)-AMP + GDP + phosphate + 2 H(+). It participates in purine metabolism; AMP biosynthesis via de novo pathway; AMP from IMP: step 1/2. Its function is as follows. Plays an important role in the de novo pathway and in the salvage pathway of purine nucleotide biosynthesis. Catalyzes the first committed step in the biosynthesis of AMP from IMP. This Populus trichocarpa (Western balsam poplar) protein is Adenylosuccinate synthetase, chloroplastic.